The primary structure comprises 496 residues: Nitric oxide synthase, inducible (496 aa).

FMN contacts are provided by C6, E32, and Q36. The FAD-binding FR-type domain maps to 101 to 341 (KNLFTMRLRS…VRSVSGFQLP (241 aa)). Residue R121 participates in NADP(+) binding. Residues H143, R277, Y279, S280, T295, and A297 each coordinate FAD. An NADP(+)-binding site is contributed by T300. FAD contacts are provided by Y301, V314, C315, and S316. NADP(+)-binding residues include T355, R388, S417, R418, K424, Y426, Q428, and D461.

This sequence belongs to the NOS family. Homodimer. Interacts with NHERF1. Interacts with GAPDH; induced by oxidatively-modified low-densitity lipoprotein (LDL(ox)). Interacts with S100A8 and S100A9 to form the iNOS-S100A8/9 transnitrosylase complex. Interacts with SPSB1, SPSB2 and SPSB4. Interacts with ELOC and CUL5 in the presence of SPSB1 or SPSB2 or SPSB4. Forms a complex with ASL, ASS1 and HSP90AA1; the complex regulates cell-autonomous L-arginine synthesis and citrulline recycling while channeling extracellular L-arginine to nitric oxide synthesis pathway. Heme b serves as cofactor. Requires FAD as cofactor. It depends on FMN as a cofactor. (6R)-L-erythro-5,6,7,8-tetrahydrobiopterin is required as a cofactor. Post-translationally, polyubiquitinated; mediated by SPSB1, SPSB2 and SPSB4, leading to proteasomal degradation.

It is found in the cytoplasm. Its subcellular location is the cytosol. It carries out the reaction 2 L-arginine + 3 NADPH + 4 O2 + H(+) = 2 L-citrulline + 2 nitric oxide + 3 NADP(+) + 4 H2O. Not stimulated by calcium/calmodulin. Its function is as follows. Produces nitric oxide (NO) which is a messenger molecule with diverse functions throughout the body. In macrophages, NO mediates tumoricidal and bactericidal actions. Also has nitrosylase activity and mediates cysteine S-nitrosylation of cytoplasmic target proteins such PTGS2/COX2. As component of the iNOS-S100A8/9 transnitrosylase complex involved in the selective inflammatory stimulus-dependent S-nitrosylation of GAPDH implicated in regulation of the GAIT complex activity and probably multiple targets including ANXA5, EZR, MSN and VIM. Involved in inflammation, enhances the synthesis of pro-inflammatory mediators such as IL6 and IL8. The protein is Nitric oxide synthase, inducible (NOS2) of Oryctolagus cuniculus (Rabbit).